A 242-amino-acid polypeptide reads, in one-letter code: Phosphoribosylaminoimidazole-succinocarboxamide synthase (242 aa).

It belongs to the SAICAR synthetase family.

The catalysed reaction is 5-amino-1-(5-phospho-D-ribosyl)imidazole-4-carboxylate + L-aspartate + ATP = (2S)-2-[5-amino-1-(5-phospho-beta-D-ribosyl)imidazole-4-carboxamido]succinate + ADP + phosphate + 2 H(+). It functions in the pathway purine metabolism; IMP biosynthesis via de novo pathway; 5-amino-1-(5-phospho-D-ribosyl)imidazole-4-carboxamide from 5-amino-1-(5-phospho-D-ribosyl)imidazole-4-carboxylate: step 1/2. This is Phosphoribosylaminoimidazole-succinocarboxamide synthase from Ehrlichia chaffeensis (strain ATCC CRL-10679 / Arkansas).